The chain runs to 611 residues: Rho-related BTB domain-containing protein 3 (611 aa).

The rho-like stretch occupies residues 1–175 (MSIHIVALGN…KELGATYLEL (175 aa)). 2 consecutive BTB domains span residues 254–356 (VDVV…QWEE) and 420–487 (ADVV…CPAG). An interaction with Rab9 region spans residues 420 to 611 (ADVVFEIQGT…HSRKCRCLVM (192 aa)).

Interacts with RAB9A and RAB9B (at lower level compared to RAB9A-binding). Interacts with M6PRBP1/TIP47. As to expression, ubiquitous. Highly expressed in neural and cardiac tissues, pancreas, placenta and testis.

Its subcellular location is the golgi apparatus. Functionally, rab9-regulated ATPase required for endosome to Golgi transport. Involved in transport vesicle docking at the Golgi complex, possibly by participating in release M6PRBP1/TIP47 from vesicles to permit their efficient docking and fusion at the Golgi. Specifically binds Rab9, but not other Rab proteins. Has low intrinsic ATPase activity due to autoinhibition, which is relieved by Rab9. In Homo sapiens (Human), this protein is Rho-related BTB domain-containing protein 3 (RHOBTB3).